A 363-amino-acid polypeptide reads, in one-letter code: Peptide chain release factor 1 (363 aa).

Position 237 is an N5-methylglutamine (Q237). A compositionally biased stretch (basic and acidic residues) spans 284 to 296; that stretch reads EDEKRRSAEESTR. The interval 284–305 is disordered; it reads EDEKRRSAEESTRRSLVASGDR.

It belongs to the prokaryotic/mitochondrial release factor family. Post-translationally, methylated by PrmC. Methylation increases the termination efficiency of RF1.

The protein resides in the cytoplasm. In terms of biological role, peptide chain release factor 1 directs the termination of translation in response to the peptide chain termination codons UAG and UAA. The polypeptide is Peptide chain release factor 1 (Shewanella baltica (strain OS195)).